A 389-amino-acid chain; its full sequence is S-adenosylmethionine synthase (389 aa).

Residue His-19 coordinates ATP. Asp-21 provides a ligand contact to Mg(2+). Residue Glu-47 coordinates K(+). Residues Glu-60 and Gln-103 each contribute to the L-methionine site. Residues 103-113 form a flexible loop region; the sequence is QSVDIAQGVSR. Residues 168 to 170, 234 to 235, Asp-243, 249 to 250, Ala-266, and Lys-270 contribute to the ATP site; these read DGK, RF, and RK. Asp-243 contacts L-methionine. Lys-274 lines the L-methionine pocket.

The protein belongs to the AdoMet synthase family. Homotetramer; dimer of dimers. Mg(2+) is required as a cofactor. K(+) serves as cofactor.

Its subcellular location is the cytoplasm. It catalyses the reaction L-methionine + ATP + H2O = S-adenosyl-L-methionine + phosphate + diphosphate. It participates in amino-acid biosynthesis; S-adenosyl-L-methionine biosynthesis; S-adenosyl-L-methionine from L-methionine: step 1/1. Catalyzes the formation of S-adenosylmethionine (AdoMet) from methionine and ATP. The overall synthetic reaction is composed of two sequential steps, AdoMet formation and the subsequent tripolyphosphate hydrolysis which occurs prior to release of AdoMet from the enzyme. The protein is S-adenosylmethionine synthase of Solidesulfovibrio magneticus (strain ATCC 700980 / DSM 13731 / RS-1) (Desulfovibrio magneticus).